Consider the following 311-residue polypeptide: Putative S-adenosyl-L-methionine-dependent methyltransferase MMAR_0358 (311 aa).

S-adenosyl-L-methionine is bound by residues Asp132 and 161-162 (DL).

It belongs to the UPF0677 family.

Exhibits S-adenosyl-L-methionine-dependent methyltransferase activity. The polypeptide is Putative S-adenosyl-L-methionine-dependent methyltransferase MMAR_0358 (Mycobacterium marinum (strain ATCC BAA-535 / M)).